The primary structure comprises 423 residues: Imidazolonepropionase (423 aa).

Positions 78 and 80 each coordinate Fe(3+). Zn(2+) contacts are provided by His-78 and His-80. Arg-87, Tyr-150, and His-183 together coordinate 4-imidazolone-5-propanoate. Tyr-150 contacts N-formimidoyl-L-glutamate. His-247 contributes to the Fe(3+) binding site. His-247 provides a ligand contact to Zn(2+). Glu-250 provides a ligand contact to 4-imidazolone-5-propanoate. A Fe(3+)-binding site is contributed by Asp-322. Position 322 (Asp-322) interacts with Zn(2+). N-formimidoyl-L-glutamate-binding residues include Asn-324 and Gly-326. Residue Ser-327 participates in 4-imidazolone-5-propanoate binding.

It belongs to the metallo-dependent hydrolases superfamily. HutI family. Requires Zn(2+) as cofactor. It depends on Fe(3+) as a cofactor.

It localises to the cytoplasm. It catalyses the reaction 4-imidazolone-5-propanoate + H2O = N-formimidoyl-L-glutamate. It functions in the pathway amino-acid degradation; L-histidine degradation into L-glutamate; N-formimidoyl-L-glutamate from L-histidine: step 3/3. Catalyzes the hydrolytic cleavage of the carbon-nitrogen bond in imidazolone-5-propanoate to yield N-formimidoyl-L-glutamate. It is the third step in the universal histidine degradation pathway. The polypeptide is Imidazolonepropionase (Bacillus anthracis (strain A0248)).